Here is a 220-residue protein sequence, read N- to C-terminus: NADH-quinone oxidoreductase subunit I (220 aa).

4Fe-4S ferredoxin-type domains are found at residues 71-102 (LQRLLDSGSERCIGCGLCEKICTSNCIRIITH) and 112-141 (DSYTINLGRCIYCGLCAEVCPELAIVMGNR). 8 residues coordinate [4Fe-4S] cluster: C82, C85, C88, C92, C121, C124, C127, and C131. Residues 189 to 220 (ATPLDYVQEPSKEESKKETPTSPEANKGDENV) form a disordered region. Residues 198–207 (PSKEESKKET) show a composition bias toward basic and acidic residues.

Belongs to the complex I 23 kDa subunit family. In terms of assembly, NDH-1 is composed of 14 different subunits. Subunits NuoA, H, J, K, L, M, N constitute the membrane sector of the complex. [4Fe-4S] cluster serves as cofactor.

It localises to the cell inner membrane. The enzyme catalyses a quinone + NADH + 5 H(+)(in) = a quinol + NAD(+) + 4 H(+)(out). NDH-1 shuttles electrons from NADH, via FMN and iron-sulfur (Fe-S) centers, to quinones in the respiratory chain. The immediate electron acceptor for the enzyme in this species is believed to be ubiquinone. Couples the redox reaction to proton translocation (for every two electrons transferred, four hydrogen ions are translocated across the cytoplasmic membrane), and thus conserves the redox energy in a proton gradient. The protein is NADH-quinone oxidoreductase subunit I of Helicobacter acinonychis (strain Sheeba).